Consider the following 94-residue polypeptide: MVKGSNKAADRLAKLEEQRARINAEIQRVRAREQQQERKNETRRKVLVGAMILAKVNSSEWPEDRLMAAMDAYLERDHDRALFGLPPRQKDEPG.

Interacts with MobA and MobB to form the relaxosome.

Functionally, this protein is essential to promote the specific transfer of the plasmid in the presence of conjugative plasmids. This Escherichia coli protein is Mobilization protein C (mobC).